A 201-amino-acid polypeptide reads, in one-letter code: Protein TraJ (201 aa).

Its subcellular location is the cytoplasm. This protein is essential for positively regulating the expression of transfer genes that are involved in the conjugal transfer of DNA between bacterial cells. The sequence is that of Protein TraJ (traJ) from Escherichia coli.